Reading from the N-terminus, the 125-residue chain is Small ribosomal subunit protein uS11 (125 aa).

This sequence belongs to the universal ribosomal protein uS11 family. As to quaternary structure, part of the 30S ribosomal subunit. Interacts with proteins S7 and S18. Binds to IF-3.

In terms of biological role, located on the platform of the 30S subunit, it bridges several disparate RNA helices of the 16S rRNA. Forms part of the Shine-Dalgarno cleft in the 70S ribosome. The chain is Small ribosomal subunit protein uS11 from Coprothermobacter proteolyticus (strain ATCC 35245 / DSM 5265 / OCM 4 / BT).